A 378-amino-acid polypeptide reads, in one-letter code: Erythronate-4-phosphate dehydrogenase (378 aa).

Substrate-binding residues include S45 and T66. 2 residues coordinate NAD(+): D146 and T175. The active site involves R208. NAD(+) is bound at residue D232. The active site involves E237. H254 acts as the Proton donor in catalysis. NAD(+) is bound at residue G257. Y258 contacts substrate.

It belongs to the D-isomer specific 2-hydroxyacid dehydrogenase family. PdxB subfamily. As to quaternary structure, homodimer.

It localises to the cytoplasm. It carries out the reaction 4-phospho-D-erythronate + NAD(+) = (R)-3-hydroxy-2-oxo-4-phosphooxybutanoate + NADH + H(+). Its pathway is cofactor biosynthesis; pyridoxine 5'-phosphate biosynthesis; pyridoxine 5'-phosphate from D-erythrose 4-phosphate: step 2/5. Catalyzes the oxidation of erythronate-4-phosphate to 3-hydroxy-2-oxo-4-phosphonooxybutanoate. The chain is Erythronate-4-phosphate dehydrogenase from Klebsiella pneumoniae (strain 342).